We begin with the raw amino-acid sequence, 944 residues long: MSDKKRINQIAKETGLTNAELVSAAQTLGFEVKSHSSSVTAEQAEKIIQSAKTGTDQTAKVAEKPVKKSQPKAAESAKKNKEDHPRTFAGKAVVEDPAILARIKAKEEAEKAAKVEVASTEHPVVTEKPKASEPVKKAEPKVEAKSEPKVEKVETKDNTATSKAEVKPENVADKKEPVVTEEKKKSLTQKPRIQIKVIKRAEDIKKEQAAARPEKKKFDKNRNDRNNRSDNRRPNQNGNGQGGNHYDKNRSSGQGQNQGQKRDKFASSGSAPATDSFTPATSGKTSRRDRDRKKSDNNRDNTKDGNRKGGPLRVNDNRNQVRNARNSNWNQKGGRGRYQNNQSSSVPATQRKFHELPESLEYEVGMNVQDIAKSIKREPAEIIKKLFMMGTMVNQNQSLDEDTIELILMDYGVTPVKKVEEDKSDIERLFVEDGYLKEENMVERPAVVTIMGHVDHGKTTLLDRFRESRVTEGEAGGITQHIGAYQIKANGKKITFLDTPGHEAFTSMRARGASVTDITILVVAADDGVMPQTIEAINHSKAAGVPIIVAINKIDKPGANPQRVTQELTEHGVFPVAWDPENGSEFVEISAKFNQNLDELLDTVLLVAEVQELKADPTVRAIGTVVEARLDQGKGAIATLLVQQGTLHVQDPIVVGNTYGRVRTMTNDLGRRIKEAGPSTPIELTGLSDVPQAGDHFAVFEDEKAARAAGEERAKRAQLIKRQNTRRVNLDNLFDTLKEGQTKSVNIIIKADVQGSAEALAASLQKIEVEGVKVDIVHSAVGAISESDISLAAASNAIIIGFNVRPTGLAREQAAQEEVDIRLHSIIYKVIEEVETAMRGMLDPEFKEEIIGEAIVRETFNVSKVGTIAGFMVIRGKVARDASVRVIREGVVIHDGAIASLKHFKDDVKEVGNAQEGGLMVEDFNDVEIDDTFEVYKMVEIERK.

2 disordered regions span residues 50–91 (SAKT…FAGK) and 114–349 (KVEV…VPAT). 4 stretches are compositionally biased toward basic and acidic residues: residues 75 to 86 (ESAKKNKEDHPR), 124 to 157 (VVTEKPKASEPVKKAEPKVEAKSEPKVEKVETKD), 164 to 185 (AEVKPENVADKKEPVVTEEKKK), and 199 to 233 (KRAEDIKKEQAAARPEKKKFDKNRNDRNNRSDNRR). Positions 267–280 (SSGSAPATDSFTPA) are enriched in polar residues. A compositionally biased stretch (basic and acidic residues) spans 286 to 307 (SRRDRDRKKSDNNRDNTKDGNR). Composition is skewed to polar residues over residues 317-331 (NRNQVRNARNSNWNQ) and 338-348 (YQNNQSSSVPA). Residues 443–614 (ERPAVVTIMG…LLVAEVQELK (172 aa)) form the tr-type G domain. The G1 stretch occupies residues 452 to 459 (GHVDHGKT). Residue 452-459 (GHVDHGKT) coordinates GTP. A G2 region spans residues 477–481 (GITQH). Residues 498 to 501 (DTPG) form a G3 region. GTP-binding positions include 498 to 502 (DTPGH) and 552 to 555 (NKID). A G4 region spans residues 552-555 (NKID). The interval 590–592 (SAK) is G5.

Belongs to the TRAFAC class translation factor GTPase superfamily. Classic translation factor GTPase family. IF-2 subfamily.

The protein localises to the cytoplasm. One of the essential components for the initiation of protein synthesis. Protects formylmethionyl-tRNA from spontaneous hydrolysis and promotes its binding to the 30S ribosomal subunits. Also involved in the hydrolysis of GTP during the formation of the 70S ribosomal complex. The polypeptide is Translation initiation factor IF-2 (infB) (Lactococcus lactis subsp. lactis (strain IL1403) (Streptococcus lactis)).